The sequence spans 151 residues: Probable cGMP 3',5'-cyclic phosphodiesterase subunit delta (151 aa).

Belongs to the PDE6D/unc-119 family. Interacts with Pde6.

The protein localises to the nucleus. The protein resides in the cytoplasm. The protein is Probable cGMP 3',5'-cyclic phosphodiesterase subunit delta of Drosophila sechellia (Fruit fly).